Here is an 879-residue protein sequence, read N- to C-terminus: Phosphoenolpyruvate carboxylase (879 aa).

Active-site residues include histidine 138 and lysine 546.

The protein belongs to the PEPCase type 1 family. Requires Mg(2+) as cofactor.

It catalyses the reaction oxaloacetate + phosphate = phosphoenolpyruvate + hydrogencarbonate. Functionally, forms oxaloacetate, a four-carbon dicarboxylic acid source for the tricarboxylic acid cycle. The polypeptide is Phosphoenolpyruvate carboxylase (Pectobacterium carotovorum subsp. carotovorum (strain PC1)).